The chain runs to 296 residues: 33 kDa chaperonin (296 aa).

Cystine bridges form between Cys-233–Cys-235 and Cys-267–Cys-270.

Belongs to the HSP33 family. In terms of processing, under oxidizing conditions two disulfide bonds are formed involving the reactive cysteines. Under reducing conditions zinc is bound to the reactive cysteines and the protein is inactive.

It is found in the cytoplasm. In terms of biological role, redox regulated molecular chaperone. Protects both thermally unfolding and oxidatively damaged proteins from irreversible aggregation. Plays an important role in the bacterial defense system toward oxidative stress. This Actinobacillus pleuropneumoniae serotype 5b (strain L20) protein is 33 kDa chaperonin.